We begin with the raw amino-acid sequence, 617 residues long: 1-deoxy-D-xylulose-5-phosphate synthase (617 aa).

Residues His80 and 121–123 (GHS) contribute to the thiamine diphosphate site. Residue Asp152 coordinates Mg(2+). Thiamine diphosphate-binding positions include 153–154 (GA), Asn181, Tyr277, and Glu360. Position 181 (Asn181) interacts with Mg(2+).

The protein belongs to the transketolase family. DXPS subfamily. In terms of assembly, homodimer. It depends on Mg(2+) as a cofactor. The cofactor is thiamine diphosphate.

The catalysed reaction is D-glyceraldehyde 3-phosphate + pyruvate + H(+) = 1-deoxy-D-xylulose 5-phosphate + CO2. It participates in metabolic intermediate biosynthesis; 1-deoxy-D-xylulose 5-phosphate biosynthesis; 1-deoxy-D-xylulose 5-phosphate from D-glyceraldehyde 3-phosphate and pyruvate: step 1/1. Functionally, catalyzes the acyloin condensation reaction between C atoms 2 and 3 of pyruvate and glyceraldehyde 3-phosphate to yield 1-deoxy-D-xylulose-5-phosphate (DXP). This is 1-deoxy-D-xylulose-5-phosphate synthase from Blochmanniella floridana.